The chain runs to 207 residues: Ribosomal RNA large subunit methyltransferase E (207 aa).

S-adenosyl-L-methionine contacts are provided by Gly51, Trp53, Asp69, Asp85, and Asp108. The Proton acceptor role is filled by Lys148.

The protein belongs to the class I-like SAM-binding methyltransferase superfamily. RNA methyltransferase RlmE family.

Its subcellular location is the cytoplasm. The enzyme catalyses uridine(2552) in 23S rRNA + S-adenosyl-L-methionine = 2'-O-methyluridine(2552) in 23S rRNA + S-adenosyl-L-homocysteine + H(+). In terms of biological role, specifically methylates the uridine in position 2552 of 23S rRNA at the 2'-O position of the ribose in the fully assembled 50S ribosomal subunit. The polypeptide is Ribosomal RNA large subunit methyltransferase E (Methanospirillum hungatei JF-1 (strain ATCC 27890 / DSM 864 / NBRC 100397 / JF-1)).